We begin with the raw amino-acid sequence, 365 residues long: Class I histocompatibility antigen, Gogo-A*0501 alpha chain (365 aa).

A signal peptide spans 1–24 (MAVVAPRTLLLLLSGALALTQTWA). Residues 25 to 114 (GSHSMRYFST…ALRYYNQSED (90 aa)) are alpha-1. Residues 25-308 (GSHSMRYFST…EPSSQPTIPI (284 aa)) are Extracellular-facing. N110 carries N-linked (GlcNAc...) asparagine glycosylation. The interval 115–206 (GSHTIQRMYG…ENGKETLQRT (92 aa)) is alpha-2. Cystine bridges form between C125-C188 and C227-C283. Residues 207-298 (DAPKTHTTHQ…GLPKPLTLRW (92 aa)) are alpha-3. The Ig-like C1-type domain maps to 209–295 (PKTHTTHQAV…QHEGLPKPLT (87 aa)). The interval 299 to 308 (EPSSQPTIPI) is connecting peptide. Residues 309 to 332 (VGIIAGLVLFGAVIAGAVVAAVRW) form a helical membrane-spanning segment. The Cytoplasmic segment spans residues 333–365 (RRKSSDRKGGSYSQAASSDSAQGSDVSLTACKV). The segment at 338–365 (DRKGGSYSQAASSDSAQGSDVSLTACKV) is disordered. Over residues 342-359 (GSYSQAASSDSAQGSDVS) the composition is skewed to low complexity. Residue S343 is modified to Phosphoserine. At Y344 the chain carries Phosphotyrosine. Phosphoserine occurs at positions 345, 349, 352, 356, and 359.

The protein belongs to the MHC class I family. Heterodimer of an alpha chain and a beta chain (beta-2-microglobulin).

The protein resides in the membrane. In terms of biological role, involved in the presentation of foreign antigens to the immune system. The chain is Class I histocompatibility antigen, Gogo-A*0501 alpha chain from Gorilla gorilla gorilla (Western lowland gorilla).